Reading from the N-terminus, the 725-residue chain is Protein ALEX (725 aa).

Disordered stretches follow at residues 1–93 (MSPS…ARAQ), 177–226 (GAIA…PLTD), 256–340 (EPPL…PSQP), 396–481 (PILT…SPLL), 508–528 (PMQV…PLGH), 584–624 (LPGL…AASS), and 638–675 (ATRS…GRPR). Over residues 41 to 51 (HLRRKPCHSRH) the composition is skewed to basic residues. A compositionally biased stretch (polar residues) spans 260-276 (GSTTTPLSIWTAPQSQV). Basic and acidic residues-rich tracts occupy residues 297 to 307 (QLSEKQPRWKE) and 314 to 326 (RWKE…REGT). Composition is skewed to pro residues over residues 423-442 (PSQP…PGQP) and 459-473 (RSLP…PRSP). Low complexity-rich tracts occupy residues 584 to 598 (LPGL…AAAG) and 643 to 658 (ATQS…EAAS).

The protein belongs to the ALEX family. As to quaternary structure, interacts with the N-terminal region of the XLas isoforms of guanine nucleotide-binding protein G(s) subunit alpha.

The protein localises to the cell membrane. Its subcellular location is the cell projection. It localises to the ruffle. Its function is as follows. May inhibit the adenylyl cyclase-stimulating activity of guanine nucleotide-binding protein G(s) subunit alpha which is produced from the same locus in a different open reading frame. The sequence is that of Protein ALEX from Mus musculus (Mouse).